A 74-amino-acid chain; its full sequence is Capsid protein VP2 (74 aa).

Its subcellular location is the virion. Functionally, this extremely basic protein may tightly bind to SSV1 DNA. Essential for virus function. The sequence is that of Capsid protein VP2 (VP2) from Saccharolobus solfataricus (Sulfolobus solfataricus).